Reading from the N-terminus, the 438-residue chain is Xylose isomerase (438 aa).

Active-site residues include H100 and D103. Positions 231, 267, 270, 295, 306, 308, and 338 each coordinate Mg(2+).

The protein belongs to the xylose isomerase family. Homotetramer. It depends on Mg(2+) as a cofactor.

The protein localises to the cytoplasm. The enzyme catalyses alpha-D-xylose = alpha-D-xylulofuranose. The sequence is that of Xylose isomerase from Pseudomonas syringae pv. syringae (strain B728a).